The primary structure comprises 79 residues: Dolichyl-diphosphooligosaccharide--protein glycosyltransferase subunit TMEM258 (79 aa).

A run of 2 helical transmembrane segments spans residues 17-37 (VFPH…AWFF) and 55-75 (LISL…LLWV).

It belongs to the OST5 family. As to quaternary structure, component of the oligosaccharyltransferase (OST) complex.

It is found in the membrane. It localises to the endoplasmic reticulum. The protein localises to the cytoplasm. Its pathway is protein modification; protein glycosylation. In terms of biological role, subunit of the oligosaccharyl transferase (OST) complex that catalyzes the initial transfer of a defined glycan (Glc(3)Man(9)GlcNAc(2) in eukaryotes) from the lipid carrier dolichol-pyrophosphate to an asparagine residue within an Asn-X-Ser/Thr consensus motif in nascent polypeptide chains, the first step in protein N-glycosylation. N-glycosylation occurs cotranslationally and the complex associates with the Sec61 complex at the channel-forming translocon complex that mediates protein translocation across the endoplasmic reticulum (ER). All subunits are required for a maximal enzyme activity. This is Dolichyl-diphosphooligosaccharide--protein glycosyltransferase subunit TMEM258 from Xenopus laevis (African clawed frog).